We begin with the raw amino-acid sequence, 224 residues long: Na(+)-translocating NADH-quinone reductase subunit D (224 aa).

Helical transmembrane passes span 43–63 (TVMAIALTLVTGFSNLFISMI), 67–87 (IPSSIRMIVQMVIIASLVIVV), 104–124 (VFVGLIITNCIVMGRAEAFAM), 132–152 (FFDGIGNGLGYSAMLLVLGFV), and 179–199 (NGLLLLPPSAFFLIGLIIWAL).

It belongs to the NqrDE/RnfAE family. Composed of six subunits; NqrA, NqrB, NqrC, NqrD, NqrE and NqrF.

The protein resides in the cell inner membrane. The enzyme catalyses a ubiquinone + n Na(+)(in) + NADH + H(+) = a ubiquinol + n Na(+)(out) + NAD(+). In terms of biological role, NQR complex catalyzes the reduction of ubiquinone-1 to ubiquinol by two successive reactions, coupled with the transport of Na(+) ions from the cytoplasm to the periplasm. NqrA to NqrE are probably involved in the second step, the conversion of ubisemiquinone to ubiquinol. The protein is Na(+)-translocating NADH-quinone reductase subunit D of Pseudomonas aeruginosa (strain LESB58).